The following is a 264-amino-acid chain: Undecaprenyl-diphosphatase (264 aa).

8 helical membrane passes run 15–37, 42–62, 84–104, 108–128, 143–163, 182–202, 217–237, and 243–263; these read GLTE…LLGF, AASF…VLYW, YLLF…HDFI, LFNP…ILIV, VTPK…WPGF, IAAE…TGYD, FLAV…KGFI, and LTLR…LFFW.

The protein belongs to the UppP family.

The protein localises to the cell inner membrane. The catalysed reaction is di-trans,octa-cis-undecaprenyl diphosphate + H2O = di-trans,octa-cis-undecaprenyl phosphate + phosphate + H(+). Catalyzes the dephosphorylation of undecaprenyl diphosphate (UPP). Confers resistance to bacitracin. This chain is Undecaprenyl-diphosphatase, found in Maridesulfovibrio salexigens (strain ATCC 14822 / DSM 2638 / NCIMB 8403 / VKM B-1763) (Desulfovibrio salexigens).